The chain runs to 37 residues: MKIKASVKPRCEKCRIIRRNGRVMVICENPKHKQKQG.

This sequence belongs to the bacterial ribosomal protein bL36 family.

The chain is Large ribosomal subunit protein bL36 from Sulfurihydrogenibium sp. (strain YO3AOP1).